The primary structure comprises 449 residues: Protein tweety homolog 1 (449 aa).

Over 1–43 the chain is Extracellular; it reads MSSSHGYRASWWTYILHQVPHTNFQFEVVDNQFAPQEWPYQQA. Residues 44–64 traverse the membrane as a helical segment; that stretch reads LLFLASIAGLCLAISLILICV. The Cytoplasmic segment spans residues 65–86; sequence YLIRFCCCSSQEDDDSKSHRVC. A helical membrane pass occupies residues 87–107; sequence CVTWSCVAAVIICCAGIGIGF. Residues 108–212 lie on the Extracellular side of the membrane; sequence YGNSETNDGV…QVNFIEDYRW (105 aa). Asparagine 128 carries an N-linked (GlcNAc...) asparagine glycan. The chain crosses the membrane as a helical span at residues 213–233; that stretch reads LAYILLLLLDLIICLFTLLGL. Over 234–238 the chain is Cytoplasmic; the sequence is AKQIK. A helical transmembrane segment spans residues 239-259; it reads WLVIVMTVVSFFVLLLSWGSM. Residues 260–388 are Extracellular-facing; sequence GLEMATAVGL…LKGLCYDGME (129 aa). 2 disulfides stabilise this stretch: cysteine 273–cysteine 383 and cysteine 301–cysteine 368. Residues asparagine 282 and asparagine 353 are each glycosylated (N-linked (GlcNAc...) asparagine). Residues 389-409 form a helical membrane-spanning segment; that stretch reads GILFLLLFSFLSALSFTAAIC. Topologically, residues 410–449 are cytoplasmic; it reads SLPRAWKRFQNRDLDYDDMDEDDPFNPQESKRFVQWQSSI.

The protein belongs to the tweety family. Homotetramer; disulfide-linked. Homodimer.

The protein resides in the cell membrane. It catalyses the reaction chloride(in) = chloride(out). It carries out the reaction L-glutamate(out) = L-glutamate(in). Its function is as follows. May act as a calcium-independent, swelling-dependent volume-regulated anion channel (VRAC-swell) which plays a pivotal role in the process of regulatory volume decrease (RVD) in the brain through the efflux of anions like chloride and organic osmolytes like glutamate. This is Protein tweety homolog 1 (ttyh1) from Xenopus tropicalis (Western clawed frog).